The sequence spans 443 residues: ATP-dependent protease ATPase subunit HslU (443 aa).

ATP-binding positions include isoleucine 19 and 61-66 (GVGKTE). The interval 139 to 158 (PPRDIGFSQPEEKDSNTRQV) is disordered. Positions 256, 321, and 393 each coordinate ATP.

Belongs to the ClpX chaperone family. HslU subfamily. As to quaternary structure, a double ring-shaped homohexamer of HslV is capped on each side by a ring-shaped HslU homohexamer. The assembly of the HslU/HslV complex is dependent on binding of ATP.

Its subcellular location is the cytoplasm. Functionally, ATPase subunit of a proteasome-like degradation complex; this subunit has chaperone activity. The binding of ATP and its subsequent hydrolysis by HslU are essential for unfolding of protein substrates subsequently hydrolyzed by HslV. HslU recognizes the N-terminal part of its protein substrates and unfolds these before they are guided to HslV for hydrolysis. This chain is ATP-dependent protease ATPase subunit HslU, found in Cupriavidus taiwanensis (strain DSM 17343 / BCRC 17206 / CCUG 44338 / CIP 107171 / LMG 19424 / R1) (Ralstonia taiwanensis (strain LMG 19424)).